Here is a 1427-residue protein sequence, read N- to C-terminus: DNA-directed RNA polymerase subunit beta' (1427 aa).

The Zn(2+) site is built by Cys-66, Cys-68, Cys-81, and Cys-84. Mg(2+) is bound by residues Asp-472, Asp-474, and Asp-476. Residues Cys-815, Cys-889, Cys-896, and Cys-899 each coordinate Zn(2+).

The protein belongs to the RNA polymerase beta' chain family. The RNAP catalytic core consists of 2 alpha, 1 beta, 1 beta' and 1 omega subunit. When a sigma factor is associated with the core the holoenzyme is formed, which can initiate transcription. It depends on Mg(2+) as a cofactor. Zn(2+) is required as a cofactor.

It catalyses the reaction RNA(n) + a ribonucleoside 5'-triphosphate = RNA(n+1) + diphosphate. Functionally, DNA-dependent RNA polymerase catalyzes the transcription of DNA into RNA using the four ribonucleoside triphosphates as substrates. In Bacteroides fragilis (strain YCH46), this protein is DNA-directed RNA polymerase subunit beta'.